The sequence spans 287 residues: 4-hydroxybenzoate octaprenyltransferase (287 aa).

The next 9 helical transmembrane spans lie at 19 to 39 (PIGTLLLLWPTLWALWLASSG), 43 to 63 (LQMLMIFIAGTFLMRSAGCAI), 94 to 114 (VVVAGVLALIAFLLIQPLNIF), 118 to 138 (LSVLALLVAFIYPFTKRFLAI), 142 to 162 (VLGIAFGFGIPMAYAAVLDFI), 167 to 187 (WVLFVGNIFWAIAYDTAYAMV), 209 to 229 (VLAIAFSYGVLFVSQLWVAHL), 235 to 255 (YFLIGWGAALGCAIYQLKLVS), and 263 to 283 (FLAFRHNNWLGGFLFLGIVLG).

The protein belongs to the UbiA prenyltransferase family. Mg(2+) serves as cofactor.

It localises to the cell inner membrane. It catalyses the reaction all-trans-octaprenyl diphosphate + 4-hydroxybenzoate = 4-hydroxy-3-(all-trans-octaprenyl)benzoate + diphosphate. The protein operates within cofactor biosynthesis; ubiquinone biosynthesis. Functionally, catalyzes the prenylation of para-hydroxybenzoate (PHB) with an all-trans polyprenyl group. Mediates the second step in the final reaction sequence of ubiquinone-8 (UQ-8) biosynthesis, which is the condensation of the polyisoprenoid side chain with PHB, generating the first membrane-bound Q intermediate 3-octaprenyl-4-hydroxybenzoate. The polypeptide is 4-hydroxybenzoate octaprenyltransferase (Polynucleobacter asymbioticus (strain DSM 18221 / CIP 109841 / QLW-P1DMWA-1) (Polynucleobacter necessarius subsp. asymbioticus)).